The sequence spans 446 residues: 3-phosphoshikimate 1-carboxyvinyltransferase (446 aa).

The segment at 1-20 is disordered; that stretch reads MIMAKPLSSRRAAPLAGSAP. Positions 25, 26, and 30 each coordinate 3-phosphoshikimate. Lys-25 contributes to the phosphoenolpyruvate binding site. Gly-98 and Arg-126 together coordinate phosphoenolpyruvate. 3-phosphoshikimate-binding residues include Ser-171, Gln-173, Asp-324, and Lys-351. Position 173 (Gln-173) interacts with phosphoenolpyruvate. Residue Asp-324 is the Proton acceptor of the active site. Phosphoenolpyruvate is bound by residues Arg-355 and Arg-399.

Belongs to the EPSP synthase family. In terms of assembly, monomer.

It localises to the cytoplasm. It carries out the reaction 3-phosphoshikimate + phosphoenolpyruvate = 5-O-(1-carboxyvinyl)-3-phosphoshikimate + phosphate. It functions in the pathway metabolic intermediate biosynthesis; chorismate biosynthesis; chorismate from D-erythrose 4-phosphate and phosphoenolpyruvate: step 6/7. Its function is as follows. Catalyzes the transfer of the enolpyruvyl moiety of phosphoenolpyruvate (PEP) to the 5-hydroxyl of shikimate-3-phosphate (S3P) to produce enolpyruvyl shikimate-3-phosphate and inorganic phosphate. The sequence is that of 3-phosphoshikimate 1-carboxyvinyltransferase from Paramagnetospirillum magneticum (strain ATCC 700264 / AMB-1) (Magnetospirillum magneticum).